Consider the following 490-residue polypeptide: MLDFEAVLPAIGRQTVLCVGDLMLDEFVYGEVSRISPEAPAPVIAVQRSEINVGGAGNVARNIAALGARCIFVGLIGDDAAGRTLSAALAAEPLIEPVLVCDESRPTTRKVRFVSAHFSTHMLRADWEIAAPASLMVEQQLIDAILQQLPAADIVLLSDYAKGVLTARLIREVIDAARKLNKRVIVDPKSPNFALYRGATLLTPNRKEFAEATRSRADSQAEIAASAREAIAVADCEAILVTQSEQGMTLVPRDGEAIHVPAHPVKVRDVSGAGDTVAAVLAVMLAAGADWDVALRAANAGAAVAVSKNGTASVTLGELRRKVLPPASLAAEEKIVAAGGDLEPHLVEWRAEGLRIGFTNGCFDILHPGHVKVLTAARGACDRLIVGLNSDASVKRLKGESRPVQDERARAEVLAALEAVDLVVIFEEDTPLQLITRIVPSVLVKGGDYTREQVVGHEIVAAQGGEVVLVDILPGHSTTTLVARAQNGKA.

The segment at 1-330 (MLDFEAVLPA…RKVLPPASLA (330 aa)) is ribokinase. Position 205-208 (205-208 (NRKE)) interacts with ATP. Asp275 is an active-site residue. The tract at residues 358–490 (FTNGCFDILH…LVARAQNGKA (133 aa)) is cytidylyltransferase.

The protein in the N-terminal section; belongs to the carbohydrate kinase PfkB family. This sequence in the C-terminal section; belongs to the cytidylyltransferase family. As to quaternary structure, homodimer.

The enzyme catalyses D-glycero-beta-D-manno-heptose 7-phosphate + ATP = D-glycero-beta-D-manno-heptose 1,7-bisphosphate + ADP + H(+). It carries out the reaction D-glycero-beta-D-manno-heptose 1-phosphate + ATP + H(+) = ADP-D-glycero-beta-D-manno-heptose + diphosphate. Its pathway is nucleotide-sugar biosynthesis; ADP-L-glycero-beta-D-manno-heptose biosynthesis; ADP-L-glycero-beta-D-manno-heptose from D-glycero-beta-D-manno-heptose 7-phosphate: step 1/4. The protein operates within nucleotide-sugar biosynthesis; ADP-L-glycero-beta-D-manno-heptose biosynthesis; ADP-L-glycero-beta-D-manno-heptose from D-glycero-beta-D-manno-heptose 7-phosphate: step 3/4. In terms of biological role, catalyzes the phosphorylation of D-glycero-D-manno-heptose 7-phosphate at the C-1 position to selectively form D-glycero-beta-D-manno-heptose-1,7-bisphosphate. Functionally, catalyzes the ADP transfer from ATP to D-glycero-beta-D-manno-heptose 1-phosphate, yielding ADP-D-glycero-beta-D-manno-heptose. This chain is Bifunctional protein HldE, found in Rhodopseudomonas palustris (strain BisB18).